Consider the following 146-residue polypeptide: Hemoglobin subunit beta (146 aa).

The Globin domain occupies 2–146 (QWTAEEKQLI…VAHALARKYH (145 aa)). Positions 63 and 92 each coordinate heme b.

It belongs to the globin family. Heterotetramer of two alpha chains and two beta chains. Red blood cells.

Its function is as follows. Involved in oxygen transport from the lung to the various peripheral tissues. In Sturnus vulgaris (Starling), this protein is Hemoglobin subunit beta (HBB).